We begin with the raw amino-acid sequence, 458 residues long: Ammonium transporter Rh type B (458 aa).

Over 1 to 13 (MAGSPSRAAGRRL) the chain is Cytoplasmic. Residues 14–34 (QLPLLCLFLQGATAVLFAVFV) traverse the membrane as a helical segment. At 35 to 61 (RYNHKTDAALWHRGNHSNADNEFYFRY) the chain is on the extracellular side. Asparagine 49 is a glycosylation site (N-linked (GlcNAc...) asparagine). Residues 62-82 (PSFQDVHAMVFVGFGFLMVFL) form a helical membrane-spanning segment. Over 83–86 (QRYG) the chain is Cytoplasmic. A helical membrane pass occupies residues 87–107 (FSSVGFTFLLAAFALQWSTLV). The Extracellular portion of the chain corresponds to 108–124 (QGFLHSFHSGHIHVGVE). A helical transmembrane segment spans residues 125–145 (SMINADFCAGAVLISFGAVLG). Over 146 to 149 (KTGP) the chain is Cytoplasmic. Residues 150-170 (AQLLLMALLEVVLFGINEFVL) traverse the membrane as a helical segment. Residues 171 to 178 (LHLLGVRD) lie on the Extracellular side of the membrane. A helical transmembrane segment spans residues 179–201 (AGGSMTIHTFGAYFGLVLSRVLY). Topologically, residues 202-219 (RPQLEKSKHRQGSVYHSD) are cytoplasmic. Residues 220–240 (LFAMIGTIFLWIFWPSFNSAL) traverse the membrane as a helical segment. Topologically, residues 241-251 (TALGAGQHRTA) are extracellular. Residues 252–272 (LNTYYSLAASTLGTFALSALV) traverse the membrane as a helical segment. At 273 to 282 (GEDGRLDMVH) the chain is on the cytoplasmic side. A helical membrane pass occupies residues 283 to 303 (IQNAALAGGVVVGTSSEMMLT). Residue proline 304 is a topological domain, extracellular. A helical membrane pass occupies residues 305–325 (FGALAAGFLAGTVSTLGYKFF). Topologically, residues 326-346 (TPILESKFKVQDTCGVHNLHG) are cytoplasmic. A helical membrane pass occupies residues 347-367 (MPGVLGALLGVLVAGLATHEA). Over 368–393 (YGDGLESVFPLIAEGQRSATSQAMLQ) the chain is Extracellular. The chain crosses the membrane as a helical span at residues 394-414 (LFGLFVTLMFASVGGGLGGLL). Residues 415–458 (LKLPFLDSPPDSQCYEDQVHWQVPGEHEDEAQRPLRVEEADTQA) lie on the Cytoplasmic side of the membrane. The segment at 416 to 424 (KLPFLDSPP) is interaction with ANK3. The short motif at 429-432 (YEDQ) is the Basolateral sorting signal element. The disordered stretch occupies residues 439–458 (GEHEDEAQRPLRVEEADTQA). A compositionally biased stretch (basic and acidic residues) spans 444 to 458 (EAQRPLRVEEADTQA).

Belongs to the ammonium transporter (TC 2.A.49) family. Rh subfamily. Interacts (via C-terminus) with ANK2 and ANK3; required for targeting to the basolateral membrane. N-glycosylated.

The protein localises to the cell membrane. The protein resides in the basolateral cell membrane. It catalyses the reaction NH4(+)(in) = NH4(+)(out). The catalysed reaction is methylamine(out) = methylamine(in). It carries out the reaction CO2(out) = CO2(in). Functionally, ammonium transporter involved in the maintenance of acid-base homeostasis. Transports ammonium and its related derivative methylammonium across the basolateral plasma membrane of epithelial cells likely contributing to renal transepithelial ammonia transport and ammonia metabolism. May transport either NH4(+) or NH3 ammonia species predominantly mediating an electrogenic NH4(+) transport. May act as a CO2 channel providing for renal acid secretion. In Macaca mulatta (Rhesus macaque), this protein is Ammonium transporter Rh type B (RHBG).